Consider the following 238-residue polypeptide: Deoxyribose-phosphate aldolase (238 aa).

Catalysis depends on Asp-104, which acts as the Proton donor/acceptor. Lys-168 acts as the Schiff-base intermediate with acetaldehyde in catalysis. Lys-197 (proton donor/acceptor) is an active-site residue.

Belongs to the DeoC/FbaB aldolase family. DeoC type 1 subfamily.

Its subcellular location is the cytoplasm. The enzyme catalyses 2-deoxy-D-ribose 5-phosphate = D-glyceraldehyde 3-phosphate + acetaldehyde. It functions in the pathway carbohydrate degradation; 2-deoxy-D-ribose 1-phosphate degradation; D-glyceraldehyde 3-phosphate and acetaldehyde from 2-deoxy-alpha-D-ribose 1-phosphate: step 2/2. Its function is as follows. Catalyzes a reversible aldol reaction between acetaldehyde and D-glyceraldehyde 3-phosphate to generate 2-deoxy-D-ribose 5-phosphate. The chain is Deoxyribose-phosphate aldolase from Bacteroides thetaiotaomicron (strain ATCC 29148 / DSM 2079 / JCM 5827 / CCUG 10774 / NCTC 10582 / VPI-5482 / E50).